Reading from the N-terminus, the 301-residue chain is MEQLVNELIEADVGRVLVNEPLARYTTMKIGGPADILIVPKHVAGIEKTLQLVKQYKTKWTVIGRGSNLLVSDQGIEGVVIRLGEGLDHLEVEKHKVRVGSGYPLIKLSTLLSRQGLAGLEFASGIPGSVGGAVYMNAGAHKSDISSVLSKALILFEDGAIDWLTNKELEFSYRASVLQTKRPGIVLEAVFQLQAGKREEIVRSMQNNKDYRRETQPWNHPCAGSVFRNPIPHFAGDLVEKAGLRGYRIGGAQISEMHGNFIVNTGGASAQDVLSLIELIKHTIKDKFDVDMHTEVEIIGR.

Positions 29–196 constitute an FAD-binding PCMH-type domain; the sequence is KIGGPADILI…LEAVFQLQAG (168 aa). The active site involves Arg174. Catalysis depends on Ser225, which acts as the Proton donor. Residue Glu295 is part of the active site.

Belongs to the MurB family. It depends on FAD as a cofactor.

It localises to the cytoplasm. The catalysed reaction is UDP-N-acetyl-alpha-D-muramate + NADP(+) = UDP-N-acetyl-3-O-(1-carboxyvinyl)-alpha-D-glucosamine + NADPH + H(+). It functions in the pathway cell wall biogenesis; peptidoglycan biosynthesis. In terms of biological role, cell wall formation. The protein is UDP-N-acetylenolpyruvoylglucosamine reductase 1 (murB1) of Bacillus cereus (strain ATCC 14579 / DSM 31 / CCUG 7414 / JCM 2152 / NBRC 15305 / NCIMB 9373 / NCTC 2599 / NRRL B-3711).